Consider the following 592-residue polypeptide: Aspartate--tRNA(Asp/Asn) ligase (592 aa).

Glutamate 175 contacts L-aspartate. An aspartate region spans residues 199-202 (QLFK). Arginine 221 serves as a coordination point for L-aspartate. ATP-binding positions include 221 to 223 (RDE) and glutamine 230. Residue histidine 447 coordinates L-aspartate. Glutamate 481 is an ATP binding site. An L-aspartate-binding site is contributed by arginine 488. 533 to 536 (GIDR) serves as a coordination point for ATP.

Belongs to the class-II aminoacyl-tRNA synthetase family. Type 1 subfamily. In terms of assembly, homodimer.

The protein resides in the cytoplasm. The catalysed reaction is tRNA(Asx) + L-aspartate + ATP = L-aspartyl-tRNA(Asx) + AMP + diphosphate. Its function is as follows. Aspartyl-tRNA synthetase with relaxed tRNA specificity since it is able to aspartylate not only its cognate tRNA(Asp) but also tRNA(Asn). Reaction proceeds in two steps: L-aspartate is first activated by ATP to form Asp-AMP and then transferred to the acceptor end of tRNA(Asp/Asn). The polypeptide is Aspartate--tRNA(Asp/Asn) ligase (Dictyoglomus turgidum (strain DSM 6724 / Z-1310)).